Reading from the N-terminus, the 222-residue chain is ATP-dependent dethiobiotin synthetase BioD (222 aa).

12 to 17 (DVGKTF) provides a ligand contact to ATP. A Mg(2+)-binding site is contributed by threonine 16. The active site involves lysine 37. Residue serine 41 participates in substrate binding. Residues aspartate 54 and 113 to 116 (EGAG) contribute to the ATP site. 2 residues coordinate Mg(2+): aspartate 54 and glutamate 113.

Belongs to the dethiobiotin synthetase family. In terms of assembly, homodimer. It depends on Mg(2+) as a cofactor.

It localises to the cytoplasm. It catalyses the reaction (7R,8S)-7,8-diammoniononanoate + CO2 + ATP = (4R,5S)-dethiobiotin + ADP + phosphate + 3 H(+). Its pathway is cofactor biosynthesis; biotin biosynthesis; biotin from 7,8-diaminononanoate: step 1/2. Functionally, catalyzes a mechanistically unusual reaction, the ATP-dependent insertion of CO2 between the N7 and N8 nitrogen atoms of 7,8-diaminopelargonic acid (DAPA, also called 7,8-diammoniononanoate) to form a ureido ring. This is ATP-dependent dethiobiotin synthetase BioD from Anoxybacillus flavithermus (strain DSM 21510 / WK1).